Here is a 90-residue protein sequence, read N- to C-terminus: ATVPAGTSVYQQPAVQYQQYQPYQTVVQSQPQQVVAGRVVPAVYPATVGSQVYPSGVVPATVYNSGIVRNVYPAGVVPAVAGAYQYFPTD.

In terms of biological role, component of the cuticle of migratory locust which contains more than 100 different structural proteins. The polypeptide is Cuticle protein 9.5 (Locusta migratoria (Migratory locust)).